A 177-amino-acid chain; its full sequence is Large ribosomal subunit protein uL6 (177 aa).

This sequence belongs to the universal ribosomal protein uL6 family. As to quaternary structure, part of the 50S ribosomal subunit.

This protein binds to the 23S rRNA, and is important in its secondary structure. It is located near the subunit interface in the base of the L7/L12 stalk, and near the tRNA binding site of the peptidyltransferase center. This chain is Large ribosomal subunit protein uL6, found in Rickettsia rickettsii (strain Iowa).